Here is a 398-residue protein sequence, read N- to C-terminus: Bone morphogenetic protein 2-A (398 aa).

Positions 1 to 23 are cleaved as a signal peptide; sequence MVAGIHSLLLLLFYQVLLSGCTG. The propeptide occupies 24-284; it reads LIPEEGKRKY…GHALHKRQKR (261 aa). 3 N-linked (GlcNAc...) asparagine glycosylation sites follow: Asn-137, Asn-202, and Asn-340. 3 cysteine pairs are disulfide-bonded: Cys-298–Cys-363, Cys-327–Cys-395, and Cys-331–Cys-397.

It belongs to the TGF-beta family. As to quaternary structure, homodimer; disulfide-linked.

It localises to the secreted. Functionally, induces cartilage and bone formation. The protein is Bone morphogenetic protein 2-A (bmp2-a) of Xenopus laevis (African clawed frog).